Consider the following 164-residue polypeptide: UPF0262 protein Xaut_1232 (164 aa).

Belongs to the UPF0262 family.

This chain is UPF0262 protein Xaut_1232, found in Xanthobacter autotrophicus (strain ATCC BAA-1158 / Py2).